Here is an 880-residue protein sequence, read N- to C-terminus: Valine--tRNA ligase (880 aa).

The short motif at Pro-49–His-59 is the 'HIGH' region element. The 'KMSKS' region signature appears at Lys-525–Ser-529. Position 528 (Lys-528) interacts with ATP. Residues Leu-809–Arg-880 are a coiled coil.

Belongs to the class-I aminoacyl-tRNA synthetase family. ValS type 1 subfamily. In terms of assembly, monomer.

The protein localises to the cytoplasm. The enzyme catalyses tRNA(Val) + L-valine + ATP = L-valyl-tRNA(Val) + AMP + diphosphate. Functionally, catalyzes the attachment of valine to tRNA(Val). As ValRS can inadvertently accommodate and process structurally similar amino acids such as threonine, to avoid such errors, it has a 'posttransfer' editing activity that hydrolyzes mischarged Thr-tRNA(Val) in a tRNA-dependent manner. The protein is Valine--tRNA ligase (valS) of Geobacillus stearothermophilus (Bacillus stearothermophilus).